A 717-amino-acid chain; its full sequence is ATP-dependent RNA helicase homolog DQX1 (717 aa).

Residues 57-225 enclose the Helicase ATP-binding domain; that stretch reads QLESNPTGVV…WGNPPIVHIP (169 aa). 70–77 contributes to the ATP binding site; that stretch reads GEPGSGKS. The DEAQ box signature appears at 170 to 173; that stretch reads DEAQ. The region spanning 248–447 is the Helicase C-terminal domain; that stretch reads ACQAVLELCR…ALMQALEDLD (200 aa). The segment at 694 to 717 is disordered; that stretch reads GMADSTAGSKSSSAQEFRDPCVLQ. Residues 699 to 708 show a composition bias toward polar residues; it reads TAGSKSSSAQ.

The protein resides in the nucleus. Its function is as follows. Might be involved in RNA metabolism; it is missing helicase motif III and may not have helicase activity. The protein is ATP-dependent RNA helicase homolog DQX1 (DQX1) of Homo sapiens (Human).